The primary structure comprises 235 residues: Enolase-phosphatase E1 (235 aa).

Belongs to the HAD-like hydrolase superfamily. MasA/MtnC family. In terms of assembly, monomer. Mg(2+) is required as a cofactor.

The catalysed reaction is 5-methylsulfanyl-2,3-dioxopentyl phosphate + H2O = 1,2-dihydroxy-5-(methylsulfanyl)pent-1-en-3-one + phosphate. The protein operates within amino-acid biosynthesis; L-methionine biosynthesis via salvage pathway; L-methionine from S-methyl-5-thio-alpha-D-ribose 1-phosphate: step 3/6. Its pathway is amino-acid biosynthesis; L-methionine biosynthesis via salvage pathway; L-methionine from S-methyl-5-thio-alpha-D-ribose 1-phosphate: step 4/6. Bifunctional enzyme that catalyzes the enolization of 2,3-diketo-5-methylthiopentyl-1-phosphate (DK-MTP-1-P) into the intermediate 2-hydroxy-3-keto-5-methylthiopentenyl-1-phosphate (HK-MTPenyl-1-P), which is then dephosphorylated to form the acireductone 1,2-dihydroxy-3-keto-5-methylthiopentene (DHK-MTPene). In Parvibaculum lavamentivorans (strain DS-1 / DSM 13023 / NCIMB 13966), this protein is Enolase-phosphatase E1.